The chain runs to 359 residues: 3-isopropylmalate dehydrogenase (359 aa).

77–88 (GPKWGTGDVRPE) lines the NAD(+) pocket. The substrate site is built by Arg-95, Arg-105, Arg-134, and Asp-223. Positions 223, 248, and 252 each coordinate Mg(2+). 287–298 (GSAPDLPAGKVN) serves as a coordination point for NAD(+).

It belongs to the isocitrate and isopropylmalate dehydrogenases family. As to quaternary structure, homodimer. Requires Mg(2+) as cofactor. Mn(2+) is required as a cofactor.

It is found in the cytoplasm. The catalysed reaction is (2R,3S)-3-isopropylmalate + NAD(+) = 4-methyl-2-oxopentanoate + CO2 + NADH. It participates in amino-acid biosynthesis; L-leucine biosynthesis; L-leucine from 3-methyl-2-oxobutanoate: step 3/4. Its function is as follows. Catalyzes the oxidation of 3-carboxy-2-hydroxy-4-methylpentanoate (3-isopropylmalate) to 3-carboxy-4-methyl-2-oxopentanoate. The product decarboxylates to 4-methyl-2 oxopentanoate. This chain is 3-isopropylmalate dehydrogenase (LEU2), found in Diutina rugosa (Yeast).